The chain runs to 350 residues: Arginine/serine-rich coiled-coil protein 2 (350 aa).

Disordered regions lie at residues 1–146 (MIRT…FRGR) and 328–350 (SQTHTQRGMGLGFTSSMRGMDAV). The segment covering 10–24 (QARRHEVKAKSSKKH) has biased composition (basic residues). The segment covering 25 to 51 (RSDDTVDRDHSDKIRDRLNSSENGDEK) has biased composition (basic and acidic residues). Residues 52 to 132 (HRRKEKRSSR…IEKPRRHSRS (81 aa)) are compositionally biased toward basic residues. A coiled-coil region spans residues 146 to 187 (RNAAMDAQEALARRLERAKKLQEQREKESAEKQQEIAAVAAA).

This sequence belongs to the RSRC2 family.

This Xenopus laevis (African clawed frog) protein is Arginine/serine-rich coiled-coil protein 2 (rsrc2).